Consider the following 476-residue polypeptide: Adenosylhomocysteinase (476 aa).

3 residues coordinate substrate: Thr-67, Asp-142, and Glu-202. 203 to 205 contributes to the NAD(+) binding site; the sequence is TTT. Lys-232 and Asp-236 together coordinate substrate. NAD(+) is bound by residues Asn-237, 266–271, Glu-289, Asn-324, 345–347, and Asn-390; these read GYGDVG and IGH.

This sequence belongs to the adenosylhomocysteinase family. It depends on NAD(+) as a cofactor.

It is found in the cytoplasm. It carries out the reaction S-adenosyl-L-homocysteine + H2O = L-homocysteine + adenosine. It functions in the pathway amino-acid biosynthesis; L-homocysteine biosynthesis; L-homocysteine from S-adenosyl-L-homocysteine: step 1/1. May play a key role in the regulation of the intracellular concentration of adenosylhomocysteine. This Prochlorococcus marinus (strain MIT 9303) protein is Adenosylhomocysteinase.